The chain runs to 248 residues: Probable transcriptional regulatory protein PFL_4766 (248 aa).

This sequence belongs to the TACO1 family.

The protein localises to the cytoplasm. The polypeptide is Probable transcriptional regulatory protein PFL_4766 (Pseudomonas fluorescens (strain ATCC BAA-477 / NRRL B-23932 / Pf-5)).